A 362-amino-acid polypeptide reads, in one-letter code: Heat-inducible transcription repressor HrcA (362 aa).

Belongs to the HrcA family.

Its function is as follows. Negative regulator of class I heat shock genes (grpE-dnaK-dnaJ and groELS operons). Prevents heat-shock induction of these operons. This Bradyrhizobium sp. (strain ORS 278) protein is Heat-inducible transcription repressor HrcA.